A 218-amino-acid chain; its full sequence is Small ribosomal subunit protein uS3c (218 aa).

One can recognise a KH type-2 domain in the interval 39 to 120 (IRNFMNKELL…IITCKVVGVT (82 aa)).

This sequence belongs to the universal ribosomal protein uS3 family. As to quaternary structure, part of the 30S ribosomal subunit.

It localises to the plastid. It is found in the chloroplast. This Euglena gracilis protein is Small ribosomal subunit protein uS3c (rps3).